Consider the following 118-residue polypeptide: Nucleoid-associated protein CTN_1899 (118 aa).

Belongs to the YbaB/EbfC family. As to quaternary structure, homodimer.

The protein resides in the cytoplasm. The protein localises to the nucleoid. Functionally, binds to DNA and alters its conformation. May be involved in regulation of gene expression, nucleoid organization and DNA protection. This chain is Nucleoid-associated protein CTN_1899, found in Thermotoga neapolitana (strain ATCC 49049 / DSM 4359 / NBRC 107923 / NS-E).